A 209-amino-acid chain; its full sequence is MARSKTSHNWLKEHFNDPFVKMAQKDGYRSRASYKLLEIQEKDRLIRPGMSVIDLGAAPGGWSQVTSRLIGGQGRLIASDILEMDSIPDVTFIQGDFTEDAVLAQILEAVGNSEVDLVISDMAPNMSGLAAVDMPRAMFLCELALDLAGRVLRPGGDFLIKIFQGEGFDEYHKSVRQMFEKVQMRKPSSSRDRSREQYLLGRGFRGRSE.

5 residues coordinate S-adenosyl-L-methionine: Gly60, Trp62, Asp80, Asp96, and Asp121. Residue Lys161 is the Proton acceptor of the active site. Residues 182-196 (VQMRKPSSSRDRSRE) show a composition bias toward basic and acidic residues. The segment at 182–209 (VQMRKPSSSRDRSREQYLLGRGFRGRSE) is disordered.

Belongs to the class I-like SAM-binding methyltransferase superfamily. RNA methyltransferase RlmE family.

The protein resides in the cytoplasm. It carries out the reaction uridine(2552) in 23S rRNA + S-adenosyl-L-methionine = 2'-O-methyluridine(2552) in 23S rRNA + S-adenosyl-L-homocysteine + H(+). In terms of biological role, specifically methylates the uridine in position 2552 of 23S rRNA at the 2'-O position of the ribose in the fully assembled 50S ribosomal subunit. The protein is Ribosomal RNA large subunit methyltransferase E of Pseudomonas fluorescens (strain ATCC BAA-477 / NRRL B-23932 / Pf-5).